The sequence spans 297 residues: Protein PecM (297 aa).

A run of 10 helical transmembrane segments spans residues 6–26 (FAFY…QFLP), 38–58 (ALPA…GWLW), 60–80 (LFVL…FAAY), 86–106 (VVAL…FLLL), 116–136 (VAAV…KAPL), 138–158 (PAGL…LVLT), 167–187 (MTML…ILPV), 203–223 (LAGY…MWFS), 231–251 (VIMS…GFLF), and 261–281 (LVGV…SLFS). 2 consecutive EamA domains span residues 12–130 (CVWG…LLIS) and 149–276 (MSMA…IVQD).

Belongs to the EamA transporter family.

Its subcellular location is the cell membrane. Its function is as follows. Involved in pectinase, cellulase, and blue pigment regulation. The sequence is that of Protein PecM (pecM) from Dickeya dadantii (strain 3937) (Erwinia chrysanthemi (strain 3937)).